The following is an 846-amino-acid chain: Translation initiation factor IF-2 (846 aa).

The tract at residues 94-263 is disordered; the sequence is QRSPEEIQAE…HGFQNPTGPV (170 aa). Over residues 96–135 the composition is skewed to basic and acidic residues; it reads SPEEIQAEQKRELEERRAAENAARDKVEAEVRQRNEEQAR. Composition is skewed to low complexity over residues 136–148 and 158–176; these read RQAA…APAP and AAPV…ASED. 2 stretches are compositionally biased toward basic and acidic residues: residues 177–206 and 230–239; these read AAAR…RGEA and TTDEESDGAR. Residues 240–253 are compositionally biased toward basic residues; that stretch reads RGRGGKSKLKKRNQ. Residues 346 to 513 enclose the tr-type G domain; it reads SRAPVVTVMG…AVLLQAEILE (168 aa). Residues 355–362 are G1; the sequence is GHVDHGKT. 355–362 lines the GTP pocket; that stretch reads GHVDHGKT. Residues 380 to 384 form a G2 region; the sequence is GITQH. Positions 401-404 are G3; sequence DTPG. Residues 401-405 and 455-458 contribute to the GTP site; these read DTPGH and NKID. The tract at residues 455-458 is G4; it reads NKID. Positions 491-493 are G5; the sequence is SAK.

The protein belongs to the TRAFAC class translation factor GTPase superfamily. Classic translation factor GTPase family. IF-2 subfamily.

Its subcellular location is the cytoplasm. Its function is as follows. One of the essential components for the initiation of protein synthesis. Protects formylmethionyl-tRNA from spontaneous hydrolysis and promotes its binding to the 30S ribosomal subunits. Also involved in the hydrolysis of GTP during the formation of the 70S ribosomal complex. This Pseudomonas putida (strain ATCC 700007 / DSM 6899 / JCM 31910 / BCRC 17059 / LMG 24140 / F1) protein is Translation initiation factor IF-2.